The primary structure comprises 239 residues: Uridylate kinase (239 aa).

12 to 15 provides a ligand contact to ATP; sequence KLSG. The tract at residues 20-25 is involved in allosteric activation by GTP; sequence GDQGYG. Glycine 54 is a binding site for UMP. Residues glycine 55 and arginine 59 each coordinate ATP. UMP contacts are provided by residues aspartate 74 and 135-142; that span reads TGNPYFTT. ATP contacts are provided by threonine 162, tyrosine 168, and aspartate 171.

The protein belongs to the UMP kinase family. Homohexamer.

It localises to the cytoplasm. It catalyses the reaction UMP + ATP = UDP + ADP. It participates in pyrimidine metabolism; CTP biosynthesis via de novo pathway; UDP from UMP (UMPK route): step 1/1. Its activity is regulated as follows. Allosterically activated by GTP. Inhibited by UTP. Its function is as follows. Catalyzes the reversible phosphorylation of UMP to UDP. In Geobacter metallireducens (strain ATCC 53774 / DSM 7210 / GS-15), this protein is Uridylate kinase.